We begin with the raw amino-acid sequence, 556 residues long: MSVSAFNRRWAAVILEALTRHGVRHICIAPGSRSTPLTLAAAENSAFIHHTHFDERGLGHLALGLAKVSKQPVAVIVTSGTAVANLYPALIEAGLTGEKLILLTADRPPELIDCGANQAIRQPGMFASHPTHSISLPRPTQDIPARWLVSTIDHALGTLHAGGVHINCPFAEPLYGEMDDTGLSWQQRLGDWWQDDKPWLREAPRLESEKQRDWFFWRQKRGVVVAGRMSAEEGKKVALWAQTLGWPLIGDVLSQTGQPLPCADLWLGNAKATSELQQAQIVVQLGSSLTGKRLLQWQASCEPEEYWIVDDIEGRLDPAHHRGRRLIANIADWLELHPAEKRQPWCVEIPRLAEQAMQAVIARRDAFGEAQLAHRICDYLPEQGQLFVGNSLVVRLIDALSQLPAGYPVYSNRGASGIDGLLSTAAGVQRASGKPTLAIVGDLSALYDLNALALLRQVSAPLVLIVVNNNGGQIFSLLPTPQSERERFYLMPQNVHFEHAAAMFELKYHRPQNWQELETAFADAWRTPTTTVIEMVVNDTDGAQTLQQLLAQVSHL.

This sequence belongs to the TPP enzyme family. MenD subfamily. In terms of assembly, homodimer. The cofactor is Mg(2+). It depends on Mn(2+) as a cofactor. Thiamine diphosphate is required as a cofactor.

The enzyme catalyses isochorismate + 2-oxoglutarate + H(+) = 5-enolpyruvoyl-6-hydroxy-2-succinyl-cyclohex-3-ene-1-carboxylate + CO2. It participates in quinol/quinone metabolism; 1,4-dihydroxy-2-naphthoate biosynthesis; 1,4-dihydroxy-2-naphthoate from chorismate: step 2/7. The protein operates within quinol/quinone metabolism; menaquinone biosynthesis. In terms of biological role, catalyzes the thiamine diphosphate-dependent decarboxylation of 2-oxoglutarate and the subsequent addition of the resulting succinic semialdehyde-thiamine pyrophosphate anion to isochorismate to yield 2-succinyl-5-enolpyruvyl-6-hydroxy-3-cyclohexene-1-carboxylate (SEPHCHC). This Escherichia coli (strain K12 / MC4100 / BW2952) protein is 2-succinyl-5-enolpyruvyl-6-hydroxy-3-cyclohexene-1-carboxylate synthase.